The following is a 217-amino-acid chain: Probable transaldolase (217 aa).

The active-site Schiff-base intermediate with substrate is lysine 83.

Belongs to the transaldolase family. Type 3B subfamily.

It localises to the cytoplasm. It catalyses the reaction D-sedoheptulose 7-phosphate + D-glyceraldehyde 3-phosphate = D-erythrose 4-phosphate + beta-D-fructose 6-phosphate. It functions in the pathway carbohydrate degradation; pentose phosphate pathway; D-glyceraldehyde 3-phosphate and beta-D-fructose 6-phosphate from D-ribose 5-phosphate and D-xylulose 5-phosphate (non-oxidative stage): step 2/3. Its function is as follows. Transaldolase is important for the balance of metabolites in the pentose-phosphate pathway. In Maricaulis maris (strain MCS10) (Caulobacter maris), this protein is Probable transaldolase.